The primary structure comprises 149 residues: 3-dehydroquinate dehydratase (149 aa).

Y22 acts as the Proton acceptor in catalysis. Residues N73, H79, and D86 each coordinate substrate. The active-site Proton donor is the H99. Substrate-binding positions include L100–S101 and R110.

Belongs to the type-II 3-dehydroquinase family. In terms of assembly, homododecamer.

It catalyses the reaction 3-dehydroquinate = 3-dehydroshikimate + H2O. It functions in the pathway metabolic intermediate biosynthesis; chorismate biosynthesis; chorismate from D-erythrose 4-phosphate and phosphoenolpyruvate: step 3/7. Functionally, catalyzes a trans-dehydration via an enolate intermediate. The sequence is that of 3-dehydroquinate dehydratase from Prochlorococcus marinus (strain MIT 9313).